The chain runs to 611 residues: Mitogen-activated protein kinase 10 (611 aa).

In terms of domain architecture, Protein kinase spans 25–316 (YKIQEVIGKG…AEEALAHPYF (292 aa)). ATP contacts are provided by residues 31–39 (IGKGSYGVV) and lysine 54. Aspartate 151 serves as the catalytic Proton acceptor. Phosphothreonine is present on threonine 187. Residues 187 to 189 (TDY) carry the TXY motif. Tyrosine 189 carries the post-translational modification Phosphotyrosine. Positions 394–481 (ENGGNGPVIP…RVVGPVLPYE (88 aa)) are disordered. Positions 426-439 (EQPRIGPSRDKPSD) are enriched in basic and acidic residues.

The protein belongs to the protein kinase superfamily. CMGC Ser/Thr protein kinase family. MAP kinase subfamily. Dually phosphorylated on Thr-187 and Tyr-189, which activates the enzyme.

It carries out the reaction L-seryl-[protein] + ATP = O-phospho-L-seryl-[protein] + ADP + H(+). The enzyme catalyses L-threonyl-[protein] + ATP = O-phospho-L-threonyl-[protein] + ADP + H(+). With respect to regulation, activated by threonine and tyrosine phosphorylation. The chain is Mitogen-activated protein kinase 10 (MPK10) from Oryza sativa subsp. japonica (Rice).